Here is a 585-residue protein sequence, read N- to C-terminus: Involucrin (585 aa).

Residues 1 to 15 show a composition bias toward polar residues; the sequence is MSQQHTLPVTLSPAL. The disordered stretch occupies residues 1 to 132; sequence MSQQHTLPVT…LEEEKKLLDQ (132 aa). A lipid anchor (Omega-hydroxyceramide glutamate ester) is attached at Gln79. The span at 92-115 shows a compositional bias: basic and acidic residues; it reads WEQHEEYQKAENPEQQLKQEKTQR. 2 omega-hydroxyceramide glutamate ester lipidation sites follow: Gln118 and Gln133. Residues 149 to 540 are disordered; that stretch reads KEQLLELPEQ…KDLEQQKGQL (392 aa). Tandem repeats lie at residues 153-162, 163-172, 173-182, 183-192, 193-202, 203-212, 213-222, 223-232, 233-242, 243-252, 253-262, 263-272, 273-282, 283-292, 293-302, 303-312, 313-322, 323-332, 333-342, 343-352, 353-362, 363-372, and 373-382. Residues 153 to 542 form a 39 X 10 AA approximate tandem repeats of [LP]-[EKG]-[LHVYQEK]-[PLSQE]-[EQDV]-[QHEKRGA]-Q-[EMVQLP]-[GKLE]-[QHVNLD] region; the sequence is LELPEQQEGH…LEQQKGQLEQ (390 aa). A compositionally biased stretch (basic and acidic residues) spans 159–178; that stretch reads QEGHLKHLEQQEGQLKHPEQ. Over residues 179 to 261 the composition is skewed to low complexity; the sequence is QEGQLELPEQ…QLELSEQQEG (83 aa). The segment covering 262-271 has biased composition (basic and acidic residues); the sequence is QLKHLEHQEG. Basic and acidic residues-rich tracts occupy residues 292-304, 314-328, and 341-360; these read QLKHLDQQEKQPE, KHLEQQEGQPKHLEQ, and GQLKHLEQQEGQLEHLEHQE. Over residues 361 to 383 the composition is skewed to low complexity; that stretch reads GQLGLPEQQVLQLKQLEKQQGQP. One copy of the 24; approximate repeat lies at 383-392; sequence PKHLEEEEGQ. Residues 384–393 show a composition bias toward basic and acidic residues; sequence KHLEEEEGQL. 11 consecutive repeat copies span residues 393-402, 403-412, 413-422, 423-432, 433-442, 443-452, 453-462, 463-472, 473-482, 483-492, and 493-502. Basic and acidic residues-rich tracts occupy residues 415–424 and 431–444; these read QQERQVEHLE and KHLEEQEGQLKHLE. The segment covering 445–462 has biased composition (low complexity); the sequence is QQQGQLEVPEQQVGQPKN. Residues 479 to 488 are compositionally biased toward basic and acidic residues; the sequence is QVKHLEKQEA. Residue Gln496 forms an Isoglutamyl lysine isopeptide (Gln-Lys) (interchain with K-? in other proteins) linkage. Residues 501-535 are compositionally biased toward basic and acidic residues; it reads KHLEQQEKHLEHPEQQDGQLKHLEQQEGQLKDLEQ. Residues 503–512 form a 36; approximate repeat; that stretch reads LEQQEKHLEH. 2 consecutive repeat copies span residues 513-522 and 523-532. Residues 533–542 form a 39; approximate repeat; sequence LEQQKGQLEQ.

Belongs to the involucrin family. Directly or indirectly cross-linked to cornifelin (CNFN). Substrate of transglutaminase. Some glutamines and lysines are cross-linked to other involucrin molecules, to other proteins such as keratin, desmoplakin, periplakin and envoplakin, and to lipids like omega-hydroxyceramide. Keratinocytes of epidermis and other stratified squamous epithelia.

The protein localises to the cytoplasm. Its function is as follows. Part of the insoluble cornified cell envelope (CE) of stratified squamous epithelia. The chain is Involucrin (IVL) from Homo sapiens (Human).